Reading from the N-terminus, the 220-residue chain is Translation initiation factor IF-3 (220 aa).

Residues 182–220 (TPLVKKDDKEEPATRAVRTITAPPRPTSARLASKPAGNG) are disordered. Positions 185 to 194 (VKKDDKEEPA) are enriched in basic and acidic residues.

The protein belongs to the IF-3 family. As to quaternary structure, monomer.

Its subcellular location is the cytoplasm. In terms of biological role, IF-3 binds to the 30S ribosomal subunit and shifts the equilibrium between 70S ribosomes and their 50S and 30S subunits in favor of the free subunits, thus enhancing the availability of 30S subunits on which protein synthesis initiation begins. In Synechococcus sp. (strain WH7803), this protein is Translation initiation factor IF-3.